A 169-amino-acid polypeptide reads, in one-letter code: 6,7-dimethyl-8-ribityllumazine synthase (169 aa).

5-amino-6-(D-ribitylamino)uracil-binding positions include Tyr30, 61–63, and 90–92; these read ALE and CVI. Position 95–96 (95–96) interacts with (2S)-2-hydroxy-3-oxobutyl phosphate; it reads ET. Catalysis depends on His98, which acts as the Proton donor. Asn123 serves as a coordination point for 5-amino-6-(D-ribitylamino)uracil. Arg137 is a (2S)-2-hydroxy-3-oxobutyl phosphate binding site.

This sequence belongs to the DMRL synthase family.

The enzyme catalyses (2S)-2-hydroxy-3-oxobutyl phosphate + 5-amino-6-(D-ribitylamino)uracil = 6,7-dimethyl-8-(1-D-ribityl)lumazine + phosphate + 2 H2O + H(+). The protein operates within cofactor biosynthesis; riboflavin biosynthesis; riboflavin from 2-hydroxy-3-oxobutyl phosphate and 5-amino-6-(D-ribitylamino)uracil: step 1/2. In terms of biological role, catalyzes the formation of 6,7-dimethyl-8-ribityllumazine by condensation of 5-amino-6-(D-ribitylamino)uracil with 3,4-dihydroxy-2-butanone 4-phosphate. This is the penultimate step in the biosynthesis of riboflavin. This chain is 6,7-dimethyl-8-ribityllumazine synthase, found in Methylorubrum populi (strain ATCC BAA-705 / NCIMB 13946 / BJ001) (Methylobacterium populi).